A 192-amino-acid chain; its full sequence is Xanthine phosphoribosyltransferase (192 aa).

The xanthine site is built by Leu20 and Asn27. 5-phospho-alpha-D-ribose 1-diphosphate is bound at residue 128 to 132 (ANGQA). A xanthine-binding site is contributed by Lys156.

Belongs to the purine/pyrimidine phosphoribosyltransferase family. Xpt subfamily. As to quaternary structure, homodimer.

The protein localises to the cytoplasm. It catalyses the reaction XMP + diphosphate = xanthine + 5-phospho-alpha-D-ribose 1-diphosphate. The protein operates within purine metabolism; XMP biosynthesis via salvage pathway; XMP from xanthine: step 1/1. Converts the preformed base xanthine, a product of nucleic acid breakdown, to xanthosine 5'-monophosphate (XMP), so it can be reused for RNA or DNA synthesis. This chain is Xanthine phosphoribosyltransferase, found in Ligilactobacillus salivarius (strain UCC118) (Lactobacillus salivarius).